The chain runs to 331 residues: MRVAIFSSKNYDHHSIEKENEHYGHDLVFLNERLTKETAEKAKDAEAVCIFVNDEANAEVLEILAGLGIKLVALRCAGYNNVDLDAAKKLNIKVVRVPAYSPYSVAEYAVGMLLTLNRQISRGLKRVRENNFSLEGLIGLDVHDKTVGIIGVGHIGSVFAHIMTHGFGANVIAYKPHPDPELAKKVGFRFTSLDEVIETSDIISLHCPLTPENHHMINEETLARAKKGFYLVNTSRGGLVDTKAVIKSLKAKHLGGYAADVYEEEGPLFFENHADDIIEDDILERLIAFPNVVFTGHQAFLTKEALSNIAHSILQDISDAEAGKEMPDALV.

NAD(+)-binding positions include 154–155 (HI), 234–236 (TSR), and D260. R236 is a catalytic residue. The active site involves E265. H297 (proton donor) is an active-site residue. Residue 297–300 (HQAF) coordinates NAD(+).

The protein belongs to the D-isomer specific 2-hydroxyacid dehydrogenase family.

This Zymomonas mobilis subsp. mobilis (strain ATCC 31821 / ZM4 / CP4) protein is 2-hydroxyacid dehydrogenase homolog (ddh).